The primary structure comprises 284 residues: Tropomyosin Per a 7.0101 (284 aa).

Residues 22–266 adopt a coiled-coil conformation; the sequence is ALLCEQQARD…EDELVHEKEK (245 aa).

It belongs to the tropomyosin family. Homodimer.

Functionally, tropomyosin, in association with the troponin complex, plays a central role in the calcium dependent regulation of muscle contraction. The sequence is that of Tropomyosin Per a 7.0101 from Periplaneta americana (American cockroach).